Reading from the N-terminus, the 408-residue chain is NFATC2-interacting protein (408 aa).

Positions 1 to 113 (MAEPVGKRGR…LDPGEAPLVP (113 aa)) are disordered. Residues 24 to 40 (QRSPSRGTLDVVSVDLV) show a composition bias toward low complexity. Phosphoserine is present on residues S41, S43, S73, S77, S79, S81, and S116. Residues K118 and K120 each participate in a glycyl lysine isopeptide (Lys-Gly) (interchain with G-Cter in SUMO2) cross-link. The segment at 141–205 (EEEVELADSS…TKSRKHTRAL (65 aa)) is disordered. Residues 169–181 (RTKDKEEKKKTEI) show a composition bias toward basic and acidic residues. Phosphoserine occurs at positions 187, 190, and 193. Positions 196–205 (TKSRKHTRAL) are enriched in basic residues. A coiled-coil region spans residues 197-220 (KSRKHTRALKKLSEVNKRLQDLRS). Phosphoserine occurs at positions 209 and 303. Residues T305 and T307 each carry the phosphothreonine modification. In terms of domain architecture, Ubiquitin-like spans 337-408 (LQLRVQGKEK…ESGDLIEVWG (72 aa)). Residues S358 and S379 each carry the phosphoserine modification.

In terms of assembly, interacts with NFATC2, TRAF1, TRAF2 and PRMT1. Interacts with UBE2I/UBC9. Post-translationally, methylation at the N-terminus by PRMT1 modulates interaction with the NFAT complex and results in augmented cytokine production.

It localises to the nucleus. The protein localises to the cytoplasm. Functionally, in T-helper 2 (Th2) cells, regulates the magnitude of NFAT-driven transcription of a specific subset of cytokine genes, including IL3, IL4, IL5 and IL13, but not IL2. Recruits PRMT1 to the IL4 promoter; this leads to enhancement of histone H4 'Arg-3'-methylation and facilitates subsequent histone acetylation at the IL4 locus, thus promotes robust cytokine expression. Down-regulates formation of poly-SUMO chains by UBE2I/UBC9. The protein is NFATC2-interacting protein (NFATC2IP) of Macaca fascicularis (Crab-eating macaque).